Reading from the N-terminus, the 306-residue chain is Ribosomal protein L11 methyltransferase (306 aa).

Threonine 154, glycine 179, aspartate 201, and asparagine 242 together coordinate S-adenosyl-L-methionine.

This sequence belongs to the methyltransferase superfamily. PrmA family.

The protein localises to the cytoplasm. It catalyses the reaction L-lysyl-[protein] + 3 S-adenosyl-L-methionine = N(6),N(6),N(6)-trimethyl-L-lysyl-[protein] + 3 S-adenosyl-L-homocysteine + 3 H(+). Methylates ribosomal protein L11. The protein is Ribosomal protein L11 methyltransferase of Stenotrophomonas maltophilia (strain K279a).